The primary structure comprises 707 residues: Caprin-1 (707 aa).

Low complexity-rich tracts occupy residues 1-15 (MPSATSHSGSGSKSS) and 22-43 (GSSGSEAAAGAAAPASQHPATG). The segment at 1-48 (MPSATSHSGSGSKSSGPPPPSGSSGSEAAAGAAAPASQHPATGTGAVQ) is disordered. At Pro2 the chain carries N-acetylproline. Ser10 is subject to Phosphoserine. A coiled-coil region spans residues 58-92 (VIDKKLRNLEKKKGKLDDYQERMNKGERLNQDQLD). Ser113 is subject to Phosphoserine. Residues 123–151 (KTIKKTARREQLMREEAEQKRLKTVLELQ) adopt a coiled-coil conformation. Residue Arg163 is modified to Omega-N-methylarginine. Positions 325-347 (LQQQPQAASPSVPEPHSLTPVAQ) are disordered. Over residues 326–335 (QQQPQAASPS) the composition is skewed to low complexity. Residues Ser333 and Ser341 each carry the phosphoserine modification. The segment at 358–379 (QDLMAQMQGPYNFIQDSMLDFE) is G3BP1-binding. 3 disordered regions span residues 412-443 (ESRLAQSNQVPVQPEATQVPLVSSTSEGYTAS), 523-558 (PVPPVNEPETLKQQSQYQASYNQSFSSQPHQVEQTE), and 570-620 (TYHG…RGLM). The segment covering 431 to 443 (PLVSSTSEGYTAS) has biased composition (polar residues). Low complexity predominate over residues 535-558 (QQSQYQASYNQSFSSQPHQVEQTE). Polar residues predominate over residues 572 to 603 (HGSQDQPHQVPGNHQQPPQQSTGFPRSSQPYY). Tyr623 carries the phosphotyrosine modification. An omega-N-methylarginine mark is found at Arg624 and Arg631. 2 positions are modified to phosphotyrosine: Tyr634 and Tyr637. Arg638 is modified (omega-N-methylarginine). Residues 641–655 (FSNTPNSGYTQSQFN) are compositionally biased toward polar residues. The tract at residues 641-707 (FSNTPNSGYT…MPQMNTQQVN (67 aa)) is disordered. 2 O-linked (GlcNAc) serine glycosylation sites follow: Ser642 and Ser647. Residues Tyr649, Tyr660, Tyr663, and Tyr668 each carry the phosphotyrosine modification. Low complexity-rich tracts occupy residues 674–684 (RGSGQSGPRGA) and 695–707 (NRGMPQMNTQQVN). Residue Arg696 is modified to Asymmetric dimethylarginine; alternate. Residue Arg696 is modified to Omega-N-methylarginine; alternate.

The protein belongs to the caprin family. As to quaternary structure, may form homomultimers. Interacts with G3BP1; interaction is direct and promotes stress granule formation. Interacts with G3BP2; interaction is direct and promotes stress granule formation. Interacts with PQBP1. Interacts with DDX3X. Interacts (when phosphorylated by EPHA4) with FMR1; interaction with FMR1 promotes formation of a membraneless compartment. Post-translationally, tyrosine phosphorylation by EPHA4 promotes interaction with FMR1 and liquid-liquid phase separation (LLPS) for the formation of a membraneless compartment that concentrates mRNAs with associated regulatory factors. O-glycosylated (O-GlcNAcylated), in a cell cycle-dependent manner. O-glycosylation by OGT inhibit ability to undergo liquid-liquid phase separation (LLPS). Expressed in hippocampal and neocortical pyramidal neurons, but not in Purkinje cells.

It is found in the cytoplasm. The protein resides in the cytoplasmic ribonucleoprotein granule. The protein localises to the cytosol. It localises to the cell projection. Its subcellular location is the dendrite. It is found in the lamellipodium. Ability to mediate liquid-liquid phase separation is regulated by ATP: moderate concentrations of ATP enhance phase separation, whereas high concentrations of ATP lead to inhibition of phase separation. Its function is as follows. mRNA-binding protein that acts as a regulator of mRNAs transport, translation and/or stability, and which is involved in neurogenesis, synaptic plasticity in neurons and cell proliferation and migration in multiple cell types. Plays an essential role in cytoplasmic stress granule formation. Acts as an mRNA regulator by mediating formation of some phase-separated membraneless compartment: undergoes liquid-liquid phase separation upon binding to target mRNAs, leading to assemble mRNAs into cytoplasmic ribonucleoprotein granules that concentrate mRNAs with associated regulatory factors. Undergoes liquid-liquid phase separation following phosphorylation and interaction with FMR1, promoting formation of cytoplasmic ribonucleoprotein granules that concentrate mRNAs with factors that inhibit translation and mediate deadenylation of target mRNAs. In these cytoplasmic ribonucleoprotein granules, CAPRIN1 mediates recruitment of CNOT7 deadenylase, leading to mRNA deadenylation and degradation. Binds directly and selectively to MYC and CCND2 mRNAs. In neuronal cells, directly binds to several mRNAs associated with RNA granules, including BDNF, CAMK2A, CREB1, MAP2, NTRK2 mRNAs, as well as to GRIN1 and KPNB1 mRNAs, but not to rRNAs. This chain is Caprin-1 (Caprin1), found in Rattus norvegicus (Rat).